The following is a 205-amino-acid chain: Large ribosomal subunit protein uL4 (205 aa).

It belongs to the universal ribosomal protein uL4 family. Part of the 50S ribosomal subunit.

In terms of biological role, one of the primary rRNA binding proteins, this protein initially binds near the 5'-end of the 23S rRNA. It is important during the early stages of 50S assembly. It makes multiple contacts with different domains of the 23S rRNA in the assembled 50S subunit and ribosome. Forms part of the polypeptide exit tunnel. The polypeptide is Large ribosomal subunit protein uL4 (Ruegeria sp. (strain TM1040) (Silicibacter sp.)).